The sequence spans 224 residues: MALTWNSIISAEKKKAYYQSMSEKIDAQRSLGKSIFPKEEHIFTAFDLTPFHDVKVVILGQDPYHGEGQAHGLSFSVLPGVKIPPSLRNMYKELAEDIPGFTIPEHGYLKTWAEQGVLLLNTVLTVEEAKAHSHAKFGWETFTDAIIKKINDDMEGVIFLLWGAHAQKKGANIDTSRHFILQAPHPSPLSAHRGFFGCKHFSQTNELLRKQNLSEINWGAVTSS.

The active-site Proton acceptor is the aspartate 62.

The protein belongs to the uracil-DNA glycosylase (UDG) superfamily. UNG family.

The protein resides in the cytoplasm. It catalyses the reaction Hydrolyzes single-stranded DNA or mismatched double-stranded DNA and polynucleotides, releasing free uracil.. Its function is as follows. Excises uracil residues from the DNA which can arise as a result of misincorporation of dUMP residues by DNA polymerase or due to deamination of cytosine. The protein is Uracil-DNA glycosylase of Aliivibrio fischeri (strain ATCC 700601 / ES114) (Vibrio fischeri).